Here is a 336-residue protein sequence, read N- to C-terminus: Protein FPV127 (336 aa).

The segment at 1 to 22 (MGGGLVLPTRDPPKEQDTSETA) is disordered.

The protein belongs to the poxviruses A16/G9/J5 family.

The protein is Protein FPV127 of Vertebrata (FPV).